Here is a 346-residue protein sequence, read N- to C-terminus: MAHHARWTLSQVTELFDKPLLDLLFEAQTIHRQHFDPRQVQVSTLLSIKTGACPEDCKYCPQSSRYKTGLETERLMEVEQVLDSARKAKNAGSTRFCMGAAWKNPHERDMPYLEQMVQGVKAMGLEACMTLGTLDETQAQRLASAGLDYYNHNLDTSPEFYGNIITTRTYQERLDTLDKVRDAGIKVCSGGIVGLGETVKDRAGLLLQLANLPTPPESVPINMLVKVKGTPLADNDDVDAFDFIRTIAVARIMMPTSFVRLSAGREQMNEQTQAMCFMAGANSIFYGCKLLTTPNPEEDKDVQLFRKLGLNPQQTDVMTGDNEQQQKLEEQIFNADTDQFYNAAAL.

Residues 38–256 (RQVQVSTLLS…IAVARIMMPT (219 aa)) form the Radical SAM core domain. Residues Cys53, Cys57, and Cys60 each coordinate [4Fe-4S] cluster. 4 residues coordinate [2Fe-2S] cluster: Cys97, Cys128, Cys188, and Arg260.

Belongs to the radical SAM superfamily. Biotin synthase family. As to quaternary structure, homodimer. It depends on [4Fe-4S] cluster as a cofactor. [2Fe-2S] cluster serves as cofactor.

The catalysed reaction is (4R,5S)-dethiobiotin + (sulfur carrier)-SH + 2 reduced [2Fe-2S]-[ferredoxin] + 2 S-adenosyl-L-methionine = (sulfur carrier)-H + biotin + 2 5'-deoxyadenosine + 2 L-methionine + 2 oxidized [2Fe-2S]-[ferredoxin]. The protein operates within cofactor biosynthesis; biotin biosynthesis; biotin from 7,8-diaminononanoate: step 2/2. Catalyzes the conversion of dethiobiotin (DTB) to biotin by the insertion of a sulfur atom into dethiobiotin via a radical-based mechanism. This Pseudescherichia vulneris (Escherichia vulneris) protein is Biotin synthase.